The sequence spans 473 residues: Arginine biosynthesis bifunctional protein ArgJ, mitochondrial (473 aa).

Residues Thr-201, Lys-230, Thr-241, Glu-328, Asn-468, and Thr-473 each contribute to the substrate site. The active-site Nucleophile is Thr-241.

It belongs to the ArgJ family. Heterodimer of an alpha and a beta chain. In terms of processing, the alpha and beta chains are autoproteolytically processed from a single precursor protein within the mitochondrion.

It localises to the mitochondrion matrix. It catalyses the reaction N(2)-acetyl-L-ornithine + L-glutamate = N-acetyl-L-glutamate + L-ornithine. The enzyme catalyses L-glutamate + acetyl-CoA = N-acetyl-L-glutamate + CoA + H(+). It functions in the pathway amino-acid biosynthesis; L-arginine biosynthesis; L-ornithine and N-acetyl-L-glutamate from L-glutamate and N(2)-acetyl-L-ornithine (cyclic): step 1/1. It participates in amino-acid biosynthesis; L-arginine biosynthesis; N(2)-acetyl-L-ornithine from L-glutamate: step 1/4. Functionally, catalyzes two activities which are involved in the cyclic version of arginine biosynthesis: the synthesis of acetylglutamate from glutamate and acetyl-CoA, and of ornithine by transacetylation between acetylornithine and glutamate. The sequence is that of Arginine biosynthesis bifunctional protein ArgJ, mitochondrial from Paracoccidioides lutzii (strain ATCC MYA-826 / Pb01) (Paracoccidioides brasiliensis).